The chain runs to 473 residues: Bestrophin-4 (473 aa).

The Cytoplasmic portion of the chain corresponds to 1-31 (MTVSYTLKVAEARFGGFSGLLLRWRGSIYKL). Ala-10 provides a ligand contact to Ca(2+). Residues 32–51 (LYKEFLLFGALYAVLSITYR) form a helical membrane-spanning segment. At 52-60 (LLLTQEQRY) the chain is on the extracellular side. A helical membrane pass occupies residues 61-82 (VYAQVARYCNRSADLIPLSFVL). The Cytoplasmic segment spans residues 83–237 (GFYVTLVVNR…DWISIPLVYT (155 aa)). The helical transmembrane segment at 238–255 (QVVTIAVYSFFALSLVGR) threads the bilayer. Over 256–289 (QFVEPEAGAAKPQKLLKPGQEPAPALGDPDMYVP) the chain is Extracellular. Residues 290–303 (LTTLLQFFFYAGWL) traverse the membrane as a helical segment. Topologically, residues 304–473 (KVAEQIINPF…AESGDEALEP (170 aa)) are cytoplasmic. Residues Gln-308, Asn-311, Asp-316, and Asp-319 each coordinate Ca(2+). Disordered regions lie at residues 379–408 (TFNL…PAAQ) and 428–473 (RNFG…ALEP). A compositionally biased stretch (low complexity) spans 396–407 (ASPGSGRPAPAA). A compositionally biased stretch (basic and acidic residues) spans 445-461 (FRAEEGGDPEAAARIEE). Over residues 462–473 (ESAESGDEALEP) the composition is skewed to acidic residues.

The protein belongs to the anion channel-forming bestrophin (TC 1.A.46) family. Calcium-sensitive chloride channel subfamily. In terms of tissue distribution, predominantly found in colon and the weakly in fetal brain, spinal cord, retina, lung, trachea, testis and placenta.

It is found in the cell membrane. The enzyme catalyses chloride(in) = chloride(out). It catalyses the reaction hydrogencarbonate(in) = hydrogencarbonate(out). Its function is as follows. Ligand-gated anion channel that allows the movement of anions across cell membranes when activated by Calcium (Ca2+). Mediates the movement of hydrogencarbonate and chloride. In Homo sapiens (Human), this protein is Bestrophin-4.